A 273-amino-acid polypeptide reads, in one-letter code: ATP synthase subunit delta (273 aa).

It belongs to the ATPase delta chain family. In terms of assembly, F-type ATPases have 2 components, F(1) - the catalytic core - and F(0) - the membrane proton channel. F(1) has five subunits: alpha(3), beta(3), gamma(1), delta(1), epsilon(1). F(0) has three main subunits: a(1), b(2) and c(10-14). The alpha and beta chains form an alternating ring which encloses part of the gamma chain. F(1) is attached to F(0) by a central stalk formed by the gamma and epsilon chains, while a peripheral stalk is formed by the delta and b chains.

It localises to the cell membrane. F(1)F(0) ATP synthase produces ATP from ADP in the presence of a proton or sodium gradient. F-type ATPases consist of two structural domains, F(1) containing the extramembraneous catalytic core and F(0) containing the membrane proton channel, linked together by a central stalk and a peripheral stalk. During catalysis, ATP synthesis in the catalytic domain of F(1) is coupled via a rotary mechanism of the central stalk subunits to proton translocation. In terms of biological role, this protein is part of the stalk that links CF(0) to CF(1). It either transmits conformational changes from CF(0) to CF(1) or is implicated in proton conduction. The protein is ATP synthase subunit delta of Streptomyces avermitilis (strain ATCC 31267 / DSM 46492 / JCM 5070 / NBRC 14893 / NCIMB 12804 / NRRL 8165 / MA-4680).